The primary structure comprises 1343 residues: DNA-directed RNA polymerase subunit beta (1343 aa).

It belongs to the RNA polymerase beta chain family. The RNAP catalytic core consists of 2 alpha, 1 beta, 1 beta' and 1 omega subunit. When a sigma factor is associated with the core the holoenzyme is formed, which can initiate transcription.

The catalysed reaction is RNA(n) + a ribonucleoside 5'-triphosphate = RNA(n+1) + diphosphate. Its function is as follows. DNA-dependent RNA polymerase catalyzes the transcription of DNA into RNA using the four ribonucleoside triphosphates as substrates. This is DNA-directed RNA polymerase subunit beta from Shewanella sp. (strain W3-18-1).